The primary structure comprises 432 residues: Mannan endo-1,4-beta-mannosidase 1 (432 aa).

The first 28 residues, 1 to 28 (MRLLGAHRAALLVLACVVVVVIHGLGEA), serve as a signal peptide directing secretion. The substrate site is built by W93 and N209. E210 serves as the catalytic Proton donor. Y289 contributes to the substrate binding site. E329 acts as the Nucleophile in catalysis. Residue W371 participates in substrate binding.

Belongs to the glycosyl hydrolase 5 (cellulase A) family. In terms of tissue distribution, ubiquitous.

It is found in the secreted. It catalyses the reaction Random hydrolysis of (1-&gt;4)-beta-D-mannosidic linkages in mannans, galactomannans and glucomannans.. The chain is Mannan endo-1,4-beta-mannosidase 1 (MAN1) from Oryza sativa subsp. japonica (Rice).